A 124-amino-acid chain; its full sequence is MTYNYLLILIIIYVIKIICRYFKQKNELQMESKTNLDSSKLVDPINQVNQINQVNQVNQTNQTDKIIVSFRGDKYDITDFLRKHPGGKNILIKNNGKDIEELMAEYEHSKNAYLILSKYKITEK.

The helical transmembrane segment at 5–22 threads the bilayer; it reads YLLILIIIYVIKIICRYF. Residues 49–124 form the Cytochrome b5 heme-binding domain; the sequence is NQINQVNQVN…ILSKYKITEK (76 aa). Heme-binding residues include His84 and His108.

It belongs to the cytochrome b5 family.

Its subcellular location is the membrane. Its function is as follows. Membrane bound hemoprotein which function as an electron carrier for several membrane bound oxygenases. The chain is Cytochrome b5-like protein from Acanthamoeba polyphaga (Amoeba).